The chain runs to 100 residues: Urease subunit gamma (100 aa).

This sequence belongs to the urease gamma subunit family. As to quaternary structure, heterotrimer of UreA (gamma), UreB (beta) and UreC (alpha) subunits. Three heterotrimers associate to form the active enzyme.

Its subcellular location is the cytoplasm. It carries out the reaction urea + 2 H2O + H(+) = hydrogencarbonate + 2 NH4(+). The protein operates within nitrogen metabolism; urea degradation; CO(2) and NH(3) from urea (urease route): step 1/1. The sequence is that of Urease subunit gamma from Escherichia coli O157:H7 (strain EC4115 / EHEC).